Reading from the N-terminus, the 594-residue chain is Acyl-coenzyme A thioesterase 11 (594 aa).

A mitochondrion-targeting transit peptide spans 1 to 20 (MIQNVGNHLRRGFASMFSNR). Phosphoserine occurs at positions 15 and 25. Residues 20–43 (RTSRKSISHPESGDPPTMAEGEGY) are disordered. One can recognise a HotDog ACOT-type 1 domain in the interval 45–157 (NPTEVQMSQL…LATFVAHREL (113 aa)). CoA contacts are provided by residues 93–95 (TAS), 122–124 (NSS), R183, and 272–274 (HFR). Residues 217–330 (EKTRVESVEL…FMTFVVLDKD (114 aa)) enclose the HotDog ACOT-type 2 domain. Positions 370 to 582 (KQAEVALSVP…FKACESFLLD (213 aa)) constitute an START domain.

Its subcellular location is the mitochondrion matrix. The protein localises to the cytoplasm. The enzyme catalyses hexadecanoyl-CoA + H2O = hexadecanoate + CoA + H(+). It catalyses the reaction tetradecanoyl-CoA + H2O = tetradecanoate + CoA + H(+). It carries out the reaction dodecanoyl-CoA + H2O = dodecanoate + CoA + H(+). The catalysed reaction is butanoyl-CoA + H2O = butanoate + CoA + H(+). It participates in lipid metabolism; fatty acid metabolism. Functionally, has an acyl-CoA thioesterase activity with a preference for the long chain fatty acyl-CoA thioesters hexadecanoyl-CoA/palmitoyl-CoA and tetradecanoyl-CoA/myristoyl-CoA which are the main substrates in the mitochondrial beta-oxidation pathway. The polypeptide is Acyl-coenzyme A thioesterase 11 (Acot11) (Mus musculus (Mouse)).